The primary structure comprises 109 residues: MKEEDSSFKLCVPGIVALQSPPNKAFRSTDTVGFLESELKKLLGMQQESRLWKLGSQEGRELLTRPEITVVEGEGYEVQRRLRHLPSPISVAQCLLLEEKGEMGNWPPE.

The interval 24–109 is interaction with GGN; the sequence is KAFRSTDTVG…KGEMGNWPPE (86 aa).

Interacts with CCDC159. Interacts with GGN.

The protein resides in the cytoplasm. It is found in the membrane. Its subcellular location is the golgi apparatus. May be involved in spermatogenesis. The sequence is that of Putative gametogenetin-binding protein 1 (GGNBP1) from Homo sapiens (Human).